The sequence spans 361 residues: Cysteine-rich with EGF-like domain protein 2-B (361 aa).

The N-terminal stretch at 1–24 (MNGSRAWRLAAWLLLCLSCSAAVA) is a signal peptide. In terms of domain architecture, EGF-like 1 spans 134 to 176 (DCLACLGGSERPCHGNGFCSGDGTRSGDGSCRCKAEYTGSFCL). Disulfide bonds link cysteine 138/cysteine 152, cysteine 146/cysteine 164, and cysteine 166/cysteine 175. N-linked (GlcNAc...) asparagine glycosylation is present at asparagine 188. FU repeat units lie at residues 191–238 (HAVC…EESP) and 251–298 (SFLC…SEKL). One can recognise an EGF-like 2; calcium-binding domain in the interval 288 to 329 (DVDECDASEKLCLRENEVCLNTAGSYKCTCSEGFEDKEGNCV). Intrachain disulfides connect cysteine 292–cysteine 306, cysteine 299–cysteine 315, and cysteine 317–cysteine 328. The tract at residues 339-361 (ITEGETGTPASDTNILNTAHEDL) is disordered. Residues 346–355 (TPASDTNILN) show a composition bias toward polar residues.

This sequence belongs to the CRELD family.

Its subcellular location is the secreted. The protein resides in the endoplasmic reticulum. Functionally, possible role in neuronal acetylcholine receptor transport. This Xenopus laevis (African clawed frog) protein is Cysteine-rich with EGF-like domain protein 2-B (creld2-b).